Consider the following 177-residue polypeptide: Nucleoside triphosphate/diphosphate phosphatase (177 aa).

Arg-23 functions as the Proton donor in the catalytic mechanism. The Mg(2+) site is built by Asn-87, Asp-103, Asp-105, Asp-107, Asp-120, and Glu-123.

It belongs to the Ntdp family. It depends on Mg(2+) as a cofactor.

It carries out the reaction a ribonucleoside 5'-triphosphate + H2O = a ribonucleoside 5'-diphosphate + phosphate + H(+). The catalysed reaction is a ribonucleoside 5'-diphosphate + H2O = a ribonucleoside 5'-phosphate + phosphate + H(+). Functionally, has nucleoside phosphatase activity towards nucleoside triphosphates and nucleoside diphosphates. The polypeptide is Nucleoside triphosphate/diphosphate phosphatase (Streptococcus pneumoniae serotype 19F (strain G54)).